The chain runs to 283 residues: Bifunctional protein FolD 2 (283 aa).

Residues 165–167 (GAS), serine 190, and isoleucine 231 contribute to the NADP(+) site.

The protein belongs to the tetrahydrofolate dehydrogenase/cyclohydrolase family. In terms of assembly, homodimer.

It catalyses the reaction (6R)-5,10-methylene-5,6,7,8-tetrahydrofolate + NADP(+) = (6R)-5,10-methenyltetrahydrofolate + NADPH. The catalysed reaction is (6R)-5,10-methenyltetrahydrofolate + H2O = (6R)-10-formyltetrahydrofolate + H(+). Its pathway is one-carbon metabolism; tetrahydrofolate interconversion. Catalyzes the oxidation of 5,10-methylenetetrahydrofolate to 5,10-methenyltetrahydrofolate and then the hydrolysis of 5,10-methenyltetrahydrofolate to 10-formyltetrahydrofolate. The polypeptide is Bifunctional protein FolD 2 (Bordetella pertussis (strain Tohama I / ATCC BAA-589 / NCTC 13251)).